The chain runs to 371 residues: Aminomethyltransferase (371 aa).

The protein belongs to the GcvT family. The glycine cleavage system is composed of four proteins: P, T, L and H.

It carries out the reaction N(6)-[(R)-S(8)-aminomethyldihydrolipoyl]-L-lysyl-[protein] + (6S)-5,6,7,8-tetrahydrofolate = N(6)-[(R)-dihydrolipoyl]-L-lysyl-[protein] + (6R)-5,10-methylene-5,6,7,8-tetrahydrofolate + NH4(+). Its function is as follows. The glycine cleavage system catalyzes the degradation of glycine. The protein is Aminomethyltransferase of Leptospira borgpetersenii serovar Hardjo-bovis (strain JB197).